The sequence spans 39 residues: Large ribosomal subunit protein bL36 (39 aa).

It belongs to the bacterial ribosomal protein bL36 family.

This is Large ribosomal subunit protein bL36 from Oenococcus oeni (strain ATCC BAA-331 / PSU-1).